The primary structure comprises 270 residues: uncharacterized protein (270 aa).

Residues 1 to 22 (MEYIKKIALYMSVLLLIIFIGG) form the signal peptide. Cys-23 is lipidated: N-palmitoyl cysteine. The S-diacylglycerol cysteine moiety is linked to residue Cys-23.

The protein belongs to the staphylococcal tandem lipoprotein family.

Its subcellular location is the cell membrane. This is an uncharacterized protein from Staphylococcus aureus (strain USA300).